We begin with the raw amino-acid sequence, 344 residues long: Arginine N-succinyltransferase (344 aa).

A succinyl-CoA-binding site is contributed by Leu-125. The active-site Proton donor is His-229.

This sequence belongs to the arginine N-succinyltransferase family.

The enzyme catalyses succinyl-CoA + L-arginine = N(2)-succinyl-L-arginine + CoA + H(+). The protein operates within amino-acid degradation; L-arginine degradation via AST pathway; L-glutamate and succinate from L-arginine: step 1/5. In terms of biological role, catalyzes the transfer of succinyl-CoA to arginine to produce N(2)-succinylarginine. In Salmonella typhi, this protein is Arginine N-succinyltransferase.